A 236-amino-acid polypeptide reads, in one-letter code: 2-phospho-L-lactate guanylyltransferase (236 aa).

The protein belongs to the CofC family. In terms of assembly, homodimer.

It carries out the reaction (2S)-2-phospholactate + GTP + H(+) = (2S)-lactyl-2-diphospho-5'-guanosine + diphosphate. It participates in cofactor biosynthesis; coenzyme F420 biosynthesis. Its function is as follows. Guanylyltransferase that catalyzes the activation of (2S)-2-phospholactate (2-PL) as (2S)-lactyl-2-diphospho-5'-guanosine, via the condensation of 2-PL with GTP. It is involved in the biosynthesis of coenzyme F420, a hydride carrier cofactor. This is 2-phospho-L-lactate guanylyltransferase from Natrialba magadii (strain ATCC 43099 / DSM 3394 / CCM 3739 / CIP 104546 / IAM 13178 / JCM 8861 / NBRC 102185 / NCIMB 2190 / MS3) (Natronobacterium magadii).